Here is a 254-residue protein sequence, read N- to C-terminus: Triosephosphate isomerase (254 aa).

9–11 (NWK) serves as a coordination point for substrate. Histidine 95 acts as the Electrophile in catalysis. Glutamate 167 acts as the Proton acceptor in catalysis. Substrate-binding positions include glycine 173, serine 213, and 234-235 (GG).

Belongs to the triosephosphate isomerase family. As to quaternary structure, homodimer.

The protein localises to the cytoplasm. It carries out the reaction D-glyceraldehyde 3-phosphate = dihydroxyacetone phosphate. Its pathway is carbohydrate biosynthesis; gluconeogenesis. The protein operates within carbohydrate degradation; glycolysis; D-glyceraldehyde 3-phosphate from glycerone phosphate: step 1/1. In terms of biological role, involved in the gluconeogenesis. Catalyzes stereospecifically the conversion of dihydroxyacetone phosphate (DHAP) to D-glyceraldehyde-3-phosphate (G3P). The protein is Triosephosphate isomerase of Roseiflexus castenholzii (strain DSM 13941 / HLO8).